The chain runs to 176 residues: Transcription factor E (176 aa).

The 83-residue stretch at 8–90 (NDPVIQKYLH…LWTFHYENIP (83 aa)) folds into the HTH TFE/IIEalpha-type domain.

Belongs to the TFE family. As to quaternary structure, monomer. Interaction with RNA polymerase subunits RpoF and RpoE is necessary for Tfe stimulatory transcription activity. Able to interact with Tbp and RNA polymerase in the absence of DNA promoter. Interacts both with the preinitiation and elongation complexes.

Functionally, transcription factor that plays a role in the activation of archaeal genes transcribed by RNA polymerase. Facilitates transcription initiation by enhancing TATA-box recognition by TATA-box-binding protein (Tbp), and transcription factor B (Tfb) and RNA polymerase recruitment. Not absolutely required for transcription in vitro, but particularly important in cases where Tbp or Tfb function is not optimal. It dynamically alters the nucleic acid-binding properties of RNA polymerases by stabilizing the initiation complex and destabilizing elongation complexes. Seems to translocate with the RNA polymerase following initiation and acts by binding to the non template strand of the transcription bubble in elongation complexes. This is Transcription factor E from Haloquadratum walsbyi (strain DSM 16790 / HBSQ001).